The following is a 430-amino-acid chain: Glutamate-1-semialdehyde 2,1-aminomutase (430 aa).

Lys265 carries the N6-(pyridoxal phosphate)lysine modification.

The protein belongs to the class-III pyridoxal-phosphate-dependent aminotransferase family. HemL subfamily. Homodimer. The cofactor is pyridoxal 5'-phosphate.

Its subcellular location is the cytoplasm. It carries out the reaction (S)-4-amino-5-oxopentanoate = 5-aminolevulinate. The protein operates within porphyrin-containing compound metabolism; protoporphyrin-IX biosynthesis; 5-aminolevulinate from L-glutamyl-tRNA(Glu): step 2/2. The protein is Glutamate-1-semialdehyde 2,1-aminomutase of Helicobacter pylori (strain Shi470).